The sequence spans 301 residues: Probable alpha-L-glutamate ligase (301 aa).

An ATP-grasp domain is found at 104-287 (LQLLSRRGIG…VAGMIIEHLE (184 aa)). Residues Lys141, 178 to 179 (EY), Asp187, and 211 to 213 (RSN) contribute to the ATP site. Residues Asp248, Glu260, and Asn262 each coordinate Mg(2+). Asp248, Glu260, and Asn262 together coordinate Mn(2+).

This sequence belongs to the RimK family. It depends on Mg(2+) as a cofactor. The cofactor is Mn(2+).

This chain is Probable alpha-L-glutamate ligase, found in Pseudomonas putida (strain ATCC 700007 / DSM 6899 / JCM 31910 / BCRC 17059 / LMG 24140 / F1).